Consider the following 66-residue polypeptide: Rho-elapitoxin-Da1b (66 aa).

Intrachain disulfides connect Cys-3/Cys-24, Cys-17/Cys-42, Cys-46/Cys-58, and Cys-59/Cys-64.

The protein belongs to the three-finger toxin family. Short-chain subfamily. Aminergic toxin sub-subfamily. In terms of tissue distribution, expressed by the venom gland.

It is found in the secreted. In terms of biological role, non-competitive antagonist of alpha-2 adrenergic receptors (ADRA2) in smooth muscles, and partial antagonist of D3 dopamine receptors (DRD3) (inhibits 25% of methylspiperone binding to this receptor). Also shows a low antagonism on D2 dopamine receptors (DRD2) (short isoform). Shows high affinity to adrenergic receptors (Ki=14 nM (ADRA2A), Ki=73 nM (ADRA2B), and Ki=38 nM (ADRA2C)). Increases heart rate and blood catecholamine concentrations. This is Rho-elapitoxin-Da1b from Dendroaspis angusticeps (Eastern green mamba).